Consider the following 82-residue polypeptide: Probable acyl carrier protein IacP (82 aa).

The region spanning 3-78 is the Carrier domain; the sequence is MDIEARVKKV…DICRVVKKSL (76 aa). An O-(pantetheine 4'-phosphoryl)serine modification is found at serine 38.

Post-translationally, 4'-phosphopantetheine is transferred from CoA to a specific serine of apo-IacP.

It localises to the cytoplasm. Functionally, acyl carrier protein. In Salmonella typhimurium (strain SL1344), this protein is Probable acyl carrier protein IacP (iacP).